A 281-amino-acid polypeptide reads, in one-letter code: MQIITSPEELQRLCLDWRCGGVKTALVPTMGYYHAGHESLMAYARERADKVVVSLFVNPAQFAPGEDLAAYPRDLSGDAEVAQRAGADVLFTPQPEAMYPQGFDTWVEIPGLSSGLCGADRPGHFRGVCTVVMKLMLLTLPRLAVFGEKDWQQLAVLRRMAKDMHLPVTIDGCPIVRETDGLAMSSRNVYLTPEERRQAPALYQGLIRARDMVAGGERDTAVLRAAVKEYWKQHLPEGREDYLEIVHPDTLQPLERVGGMATCAAAVRLGRARLIDNLALI.

Position 30–37 (methionine 30–histidine 37) interacts with ATP. Histidine 37 serves as the catalytic Proton donor. Residue glutamine 61 coordinates (R)-pantoate. Position 61 (glutamine 61) interacts with beta-alanine. Residue glycine 147–aspartate 150 participates in ATP binding. (R)-pantoate is bound at residue glutamine 153. ATP is bound by residues valine 176 and methionine 184–arginine 187.

The protein belongs to the pantothenate synthetase family. Homodimer.

Its subcellular location is the cytoplasm. It carries out the reaction (R)-pantoate + beta-alanine + ATP = (R)-pantothenate + AMP + diphosphate + H(+). Its pathway is cofactor biosynthesis; (R)-pantothenate biosynthesis; (R)-pantothenate from (R)-pantoate and beta-alanine: step 1/1. In terms of biological role, catalyzes the condensation of pantoate with beta-alanine in an ATP-dependent reaction via a pantoyl-adenylate intermediate. This is Pantothenate synthetase from Oleidesulfovibrio alaskensis (strain ATCC BAA-1058 / DSM 17464 / G20) (Desulfovibrio alaskensis).